Consider the following 201-residue polypeptide: Orotate phosphoribosyltransferase (201 aa).

A 5-phospho-alpha-D-ribose 1-diphosphate-binding site is contributed by 113–121 (EDIITTGKS). The orotate site is built by threonine 117 and arginine 145.

The protein belongs to the purine/pyrimidine phosphoribosyltransferase family. PyrE subfamily. Homodimer. Requires Mg(2+) as cofactor.

The enzyme catalyses orotidine 5'-phosphate + diphosphate = orotate + 5-phospho-alpha-D-ribose 1-diphosphate. The protein operates within pyrimidine metabolism; UMP biosynthesis via de novo pathway; UMP from orotate: step 1/2. Functionally, catalyzes the transfer of a ribosyl phosphate group from 5-phosphoribose 1-diphosphate to orotate, leading to the formation of orotidine monophosphate (OMP). The chain is Orotate phosphoribosyltransferase from Helicobacter pylori (strain P12).